The primary structure comprises 359 residues: Homoserine O-acetyltransferase (359 aa).

The 284-residue stretch at 49–332 (VLICHALTGS…QSSYGHDAFL (284 aa)) folds into the AB hydrolase-1 domain. The Nucleophile role is filled by serine 143. Residue arginine 212 coordinates substrate. Active-site residues include aspartate 299 and histidine 328. Aspartate 329 is a binding site for substrate.

The protein belongs to the AB hydrolase superfamily. MetX family. Homodimer.

The protein resides in the cytoplasm. The enzyme catalyses L-homoserine + acetyl-CoA = O-acetyl-L-homoserine + CoA. Its pathway is amino-acid biosynthesis; L-methionine biosynthesis via de novo pathway; O-acetyl-L-homoserine from L-homoserine: step 1/1. Functionally, transfers an acetyl group from acetyl-CoA to L-homoserine, forming acetyl-L-homoserine. The protein is Homoserine O-acetyltransferase of Trichormus variabilis (strain ATCC 29413 / PCC 7937) (Anabaena variabilis).